Here is a 3461-residue protein sequence, read N- to C-terminus: Reelin (3461 aa).

The N-terminal stretch at 1–26 (MERGCWAPRALVLAVLLLLATLRARA) is a signal peptide. The Reelin domain maps to 27–191 (ATGYYPRFSP…GAPTEATAYS (165 aa)). A disulfide bond links Cys-41 and Cys-127. The N-linked (GlcNAc...) asparagine glycan is linked to Asn-141. Cys-155 and Cys-179 form a disulfide bridge. N-linked (GlcNAc...) asparagine glycosylation is found at Asn-258, Asn-290, and Asn-306. A disulfide bridge links Cys-540 with Cys-581. A BNR 1 repeat occupies 593-604 (EFSTNHGRSWSL). Residues Cys-609 and Cys-614 are joined by a disulfide bond. A glycan (N-linked (GlcNAc...) asparagine) is linked at Asn-629. Residues 671-702 (IGPSCLKFCSGRGQCTRHGCKCDPGFSGPACE) form the EGF-like 1 domain. 2 cysteine pairs are disulfide-bonded: Cys-675-Cys-685 and Cys-692-Cys-701. The stretch at 799–810 (HYSYDNGITWKL) is one BNR 2 repeat. Cys-895 and Cys-937 are joined by a disulfide. A BNR 3 repeat occupies 952-963 (EYSANHGLTWHL). 3 cysteine pairs are disulfide-bonded: Cys-968/Cys-975, Cys-1034/Cys-1044, and Cys-1051/Cys-1060. The 32-residue stretch at 1030-1061 (IGQQCPNMCSGHGSCDHGVCRCDQGYQGTECH) folds into the EGF-like 2 domain. The BNR 4 repeat unit spans residues 1157 to 1168 (QYSNNGGIQWHL). N-linked (GlcNAc...) asparagine glycosylation occurs at Asn-1267. The stretch at 1323–1334 (QYSHDAGMSWFL) is one BNR 5 repeat. 4 disulfide bridges follow: Cys-1339-Cys-1348, Cys-1413-Cys-1423, Cys-1417-Cys-1428, and Cys-1430-Cys-1441. The EGF-like 3 domain maps to 1409-1442 (ISEPCPSYCSGHGDCISGVCFCDLGYTAAQGTCV). An N-linked (GlcNAc...) asparagine glycan is attached at Asn-1447. Cys-1475 and Cys-1522 are joined by a disulfide. A BNR 6 repeat occupies 1535–1546 (QYSNDNGILWHL). Asn-1600 carries an N-linked (GlcNAc...) asparagine glycan. Cys-1633 and Cys-1673 are oxidised to a cystine. Residues 1686–1697 (QYSLNNGKDWQL) form a BNR 7 repeat. Cys-1702 and Cys-1709 are joined by a disulfide. Residue Asn-1750 is glycosylated (N-linked (GlcNAc...) asparagine). In terms of domain architecture, EGF-like 4 spans 1765–1796 (LASGCPWMCSGRGICDSGRCVCDRGFGGPFCV). Residues 1884 to 1895 (QFSVSGGVTWHL) form a BNR 8 repeat. Asn-1921 carries an N-linked (GlcNAc...) asparagine glycan. Cys-1983 and Cys-2030 are joined by a disulfide. A BNR 9 repeat occupies 2043 to 2054 (EFSRDFGATWHL). Cys-2059 and Cys-2070 are disulfide-bonded. Residues His-2061 and His-2074 each contribute to the Zn(2+) site. The EGF-like 5 domain maps to 2129 to 2161 (IGPQCEEMCYGHGSCINGTKCICDPGYSGPTCK). 3 cysteine pairs are disulfide-bonded: Cys-2133–Cys-2143, Cys-2137–Cys-2149, and Cys-2151–Cys-2160. N-linked (GlcNAc...) asparagine glycosylation occurs at Asn-2145. Glu-2179 contributes to the Zn(2+) binding site. Cys-2195 and Cys-2235 are oxidised to a cystine. A BNR 10 repeat occupies 2250 to 2261 (QYSLNGGLSWSL). Glu-2264 lines the Zn(2+) pocket. Residues Asn-2269 and Asn-2317 are each glycosylated (N-linked (GlcNAc...) asparagine). 6 cysteine pairs are disulfide-bonded: Cys-2348–Cys-2387, Cys-2393–Cys-2559, Cys-2482–Cys-2492, Cys-2486–Cys-2497, Cys-2499–Cys-2508, and Cys-2544–Cys-2584. 3 residues coordinate Zn(2+): Glu-2397, Glu-2399, and His-2460. The stretch at 2399-2410 (EYSVDLGLSWHP) is one BNR 11 repeat. Positions 2478-2509 (IGDGCLDMCSGHGRCVQGSCVCDEQWGGLYCD) constitute an EGF-like 6 domain. Residue Asn-2569 is glycosylated (N-linked (GlcNAc...) asparagine). BNR repeat units lie at residues 2598–2609 (EYSVNGGITWNL) and 2778–2789 (QFSTDFGVSWSY). A disulfide bridge connects residues Cys-2794 and Cys-2801. The EGF-like 7 domain occupies 2853-2884 (LGPGCLDNCGGHGDCLKEQCICDPGYSGPNCY). Residues Cys-2919 and Cys-2966 are joined by a disulfide bond. N-linked (GlcNAc...) asparagine glycosylation occurs at Asn-2962. A BNR 14 repeat occupies 2979–2990 (DFSTDGGITWTL). 2 N-linked (GlcNAc...) asparagine glycosylation sites follow: Asn-3016 and Asn-3073. The stretch at 3143-3155 (EYTKDARSDSWQL) is one BNR 15 repeat. A disulfide bond links Cys-3160 and Cys-3170. Asn-3185 is a glycosylation site (N-linked (GlcNAc...) asparagine). In terms of domain architecture, EGF-like 8 spans 3228 to 3260 (IGEACPKLCSGHGYCTTGAVCICDESFQGDDCS). Intrachain disulfides connect Cys-3232–Cys-3242, Cys-3236–Cys-3248, Cys-3250–Cys-3259, and Cys-3296–Cys-3346. A BNR 16 repeat occupies 3363-3374 (QYSVNNGITWHV). Residues Asn-3412 and Asn-3439 are each glycosylated (N-linked (GlcNAc...) asparagine).

Belongs to the reelin family. Oligomer of disulfide-linked homodimers. Post-translationally, N-glycosylated and to a lesser extent also O-glycosylated. As to expression, the major isoform 1 is neuron-specific. It is abundantly produced during brain ontogenesis by the Cajal-Retzius cells and other pioneer neurons located in the telencephalic marginal zone and by granule cells of the external granular layer of the cerebellum. Expression is located in deeper layers in the developing hippocampus and olfactory bulb, low levels of expression are also detected in the immature striatum. At early developmental stages, expressed also in hypothalamic differentiation fields, tectum and spinal cord. A moderate to low level of expression occurs in the septal area, striatal fields, habenular nuclei, some thalamic nuclei, particularly the lateral geniculate, the retina and some nuclei of the reticular formation in the central field of the medulla. Very low levels found in liver and kidney. No expression in radial glial cells, cortical plate, Purkinje cells and inferior olivary neurons. The minor isoform 2 is only expressed in non neuronal cells. The minor isoform 3 is found in the same cells as isoform 1, but is almost undetectable in retina and brain stem.

It is found in the secreted. The protein resides in the extracellular space. It localises to the extracellular matrix. Extracellular matrix serine protease secreted by pioneer neurons that plays a role in layering of neurons in the cerebral cortex and cerebellum by coordinating cell positioning during neurodevelopment. Regulates microtubule function in neurons and neuronal migration. Binding to the extracellular domains of lipoprotein receptors VLDLR and LRP8/APOER2 induces tyrosine phosphorylation of DAB1 and modulation of TAU phosphorylation. Affects migration of sympathetic preganglionic neurons in the spinal cord, where it seems to act as a barrier to neuronal migration. Enzymatic activity is important for the modulation of cell adhesion. The chain is Reelin (Reln) from Mus musculus (Mouse).